The sequence spans 614 residues: Signal recognition particle receptor subunit alpha homolog (614 aa).

The disordered stretch occupies residues 119 to 244; the sequence is EASAKQVKAP…DRSRDSPDDV (126 aa). Basic and acidic residues predominate over residues 149–160; that stretch reads QDDKKPVEKRVN. Residues 164–178 are compositionally biased toward pro residues; sequence APPPSKSQPSSPPTG. A compositionally biased stretch (basic and acidic residues) spans 232-241; sequence ALLDRSRDSP. S237 and S240 each carry phosphoserine. A Phosphotyrosine modification is found at Y246. S268, S278, and S279 each carry phosphoserine. Residues 268 to 285 are compositionally biased toward acidic residues; the sequence is SEDEADNEDASSEGEAEE. Positions 268–290 are disordered; that stretch reads SEDEADNEDASSEGEAEEQVQSK. Residues 396-613 are NG domain; that stretch reads YTIIFCGVNG…NVNAVVNSLM (218 aa). Residues 402–409, 497–501, and 565–568 contribute to the GTP site; these read GVNGVGKS, DTAGR, and TKFD.

Belongs to the GTP-binding SRP family. As to quaternary structure, heterodimer of SrpRalpha and SrpRbeta. In terms of tissue distribution, in 8-9 hours embryos, expression is seen in a segmental pattern along embryonic ventral midline.

Its subcellular location is the endoplasmic reticulum membrane. In terms of biological role, component of the SRP (signal recognition particle) receptor. Ensures, in conjunction with the signal recognition particle, the correct targeting of the nascent secretory proteins to the endoplasmic reticulum membrane system. Forms a guanosine 5'-triphosphate (GTP)-dependent complex with the SRP subunit Srp54. SRP receptor compaction and GTPase rearrangement drive SRP-mediated cotranslational protein translocation into the ER. May have a role in axonogenesis. This is Signal recognition particle receptor subunit alpha homolog from Drosophila melanogaster (Fruit fly).